The following is a 527-amino-acid chain: T-complex protein 1 subunit beta (527 aa).

This sequence belongs to the TCP-1 chaperonin family. In terms of assembly, heterooligomeric complex of about 850 to 900 kDa that forms two stacked rings, 12 to 16 nm in diameter.

Its subcellular location is the cytoplasm. Its function is as follows. Molecular chaperone; assists the folding of proteins upon ATP hydrolysis. Known to play a role, in vitro, in the folding of actin and tubulin. The polypeptide is T-complex protein 1 subunit beta (Arabidopsis thaliana (Mouse-ear cress)).